A 306-amino-acid chain; its full sequence is Tyrosine recombinase XerC (306 aa).

The region spanning 1-85 (MQQQLEQFLA…AIKSFFEYLQ (85 aa)) is the Core-binding (CB) domain. The region spanning 106–289 (FLPKAITVAQ…SNDRAVKYDQ (184 aa)) is the Tyr recombinase domain. Residues Arg147, Lys171, His241, Arg244, and His267 contribute to the active site. The O-(3'-phospho-DNA)-tyrosine intermediate role is filled by Tyr276.

Belongs to the 'phage' integrase family. XerC subfamily. Forms a cyclic heterotetrameric complex composed of two molecules of XerC and two molecules of XerD.

The protein resides in the cytoplasm. Its function is as follows. Site-specific tyrosine recombinase, which acts by catalyzing the cutting and rejoining of the recombining DNA molecules. The XerC-XerD complex is essential to convert dimers of the bacterial chromosome into monomers to permit their segregation at cell division. It also contributes to the segregational stability of plasmids. The sequence is that of Tyrosine recombinase XerC from Herpetosiphon aurantiacus (strain ATCC 23779 / DSM 785 / 114-95).